Here is a 366-residue protein sequence, read N- to C-terminus: Putative actin-9 (366 aa).

Belongs to the actin family. As to quaternary structure, polymerization of globular actin (G-actin) leads to a structural filament (F-actin) in the form of a two-stranded helix. The binding of profilin to monomeric G-actin cause the sequestration of actin into profilactin complexes, and prevents the polymerization.

The protein localises to the cytoplasm. It is found in the cytoskeleton. Functionally, actins are highly conserved proteins that are involved in various types of cell motility and are ubiquitously expressed in all eukaryotic cells. Essential component of cell cytoskeleton; plays an important role in cytoplasmic streaming, cell shape determination, cell division, organelle movement and extension growth. This chain is Putative actin-9 (ACT9), found in Arabidopsis thaliana (Mouse-ear cress).